Here is a 127-residue protein sequence, read N- to C-terminus: Putative adhesin P1-like protein MPN_203 (127 aa).

A disordered region spans residues T70–F90.

Belongs to the adhesin P1 family.

The polypeptide is Putative adhesin P1-like protein MPN_203 (Mycoplasma pneumoniae (strain ATCC 29342 / M129 / Subtype 1) (Mycoplasmoides pneumoniae)).